The primary structure comprises 419 residues: Subtilisin-like protease 2 (419 aa).

The signal sequence occupies residues Met-1–Gly-16. Residues Asp-17–Ala-122 constitute a propeptide that is removed on maturation. In terms of domain architecture, Inhibitor I9 spans Gln-36–Ala-122. The Peptidase S8 domain maps to Arg-131–Lys-419. Catalysis depends on charge relay system residues Asp-169 and His-201. Residues Asn-248, Asn-261, and Asn-348 are each glycosylated (N-linked (GlcNAc...) asparagine). Ser-357 functions as the Charge relay system in the catalytic mechanism. Residue Asn-388 is glycosylated (N-linked (GlcNAc...) asparagine).

The protein belongs to the peptidase S8 family.

Its subcellular location is the secreted. In terms of biological role, secreted subtilisin-like serine protease with keratinolytic activity that contributes to pathogenicity. The polypeptide is Subtilisin-like protease 2 (SUB2) (Arthroderma benhamiae (Trichophyton mentagrophytes)).